The chain runs to 276 residues: 2-dehydro-3-deoxyphosphooctonate aldolase (276 aa).

This sequence belongs to the KdsA family.

It localises to the cytoplasm. It catalyses the reaction D-arabinose 5-phosphate + phosphoenolpyruvate + H2O = 3-deoxy-alpha-D-manno-2-octulosonate-8-phosphate + phosphate. The protein operates within carbohydrate biosynthesis; 3-deoxy-D-manno-octulosonate biosynthesis; 3-deoxy-D-manno-octulosonate from D-ribulose 5-phosphate: step 2/3. It participates in bacterial outer membrane biogenesis; lipopolysaccharide biosynthesis. The polypeptide is 2-dehydro-3-deoxyphosphooctonate aldolase (Helicobacter pylori (strain Shi470)).